The chain runs to 592 residues: MRVLCAFPEAMPSSNSRPPACLAPGALYLALLLHLSLSSQAGDRRPLPVDRAAGLKEKTLILLDVSTKNPVRTVNENFLSLQLDPSIIHDGWLDFLSSKRLVTLARGLSPAFLRFGGKRTDFLQFQNLRNPAKSRGGPGPDYYLKNYEDDIVRSDVALDKQKGCKIAQHPDVMLELQREKAAQMHLVLLKEQFSNTYSNLILTARSLDKLYNFADCSGLHLIFALNALRRNPNNSWNSSSALSLLKYSASKKYNISWELGNEPNNYRTMHGRAVNGSQLGKDYIQLKSLLQPIRIYSRASLYGPNIGRPRKNVIALLDGFMKVAGSTVDAVTWQHCYIDGRVVKVMDFLKTRLLDTLSDQIRKIQKVVNTYTPGKKIWLEGVVTTSAGGTNNLSDSYAAGFLWLNTLGMLANQGIDVVIRHSFFDHGYNHLVDQNFNPLPDYWLSLLYKRLIGPKVLAVHVAGLQRKPRPGRVIRDKLRIYAHCTNHHNHNYVRGSITLFIINLHRSRKKIKLAGTLRDKLVHQYLLQPYGQEGLKSKSVQLNGQPLVMVDDGTLPELKPRPLRAGRTLVIPPVTMGFYVVKNVNALACRYR.

The signal sequence occupies residues 1 to 41; it reads MRVLCAFPEAMPSSNSRPPACLAPGALYLALLLHLSLSSQA. Asn-254 and Asn-392 each carry an N-linked (GlcNAc...) asparagine glycan.

Belongs to the glycosyl hydrolase 79 family. Interacts with HPSE. Interacts with SDC1 (via glycan chains). Widely expressed, with the highest expression in brain, mammary gland, prostate, small intestine, testis and uterus. In the central nervous system, expressed in the spinal cord, caudate nucleus, thalamus, substantia nigra, medulla oblongata, putamen and pons. In the urinary bladder, expressed in longitudinal and circular layers of detrusor muscle. Found both in normal and cancer tissues.

It is found in the secreted. The protein localises to the extracellular space. Its subcellular location is the extracellular matrix. Functionally, binds heparin and heparan sulfate with high affinity, but lacks heparanase activity. Inhibits HPSE, possibly by competing for its substrates (in vitro). The sequence is that of Inactive heparanase-2 (HPSE2) from Homo sapiens (Human).